The sequence spans 352 residues: tRNA pseudouridine synthase D (352 aa).

Aspartate 78 (nucleophile) is an active-site residue. The TRUD domain occupies 153–299 (GVPNYYGEQR…LDQDRRPLLL (147 aa)).

This sequence belongs to the pseudouridine synthase TruD family.

The enzyme catalyses uridine(13) in tRNA = pseudouridine(13) in tRNA. Its function is as follows. Responsible for synthesis of pseudouridine from uracil-13 in transfer RNAs. This chain is tRNA pseudouridine synthase D, found in Aeromonas salmonicida (strain A449).